Here is a 340-residue protein sequence, read N- to C-terminus: Putative methionyl-tRNA formyltransferase (340 aa).

The protein belongs to the Fmt family.

It is found in the mitochondrion. Its subcellular location is the mitochondrion matrix. It localises to the cytoplasm. It carries out the reaction L-methionyl-tRNA(fMet) + (6R)-10-formyltetrahydrofolate = N-formyl-L-methionyl-tRNA(fMet) + (6S)-5,6,7,8-tetrahydrofolate + H(+). Functionally, formylates methionyl-tRNA in mitochondria and the cytoplasm. Responsible for the formylation of the N-terminally formylated (Nt-formylated) mitochondrial matrix proteins that are encoded by mitochondrial DNA. Nt-formylated proteins in the cytoplasm are strongly up-regulated in stationary phase or upon starvation for specific amino acids and are targeted for degradation by an E3 ubiquitin ligase-mediated fMet/N-end rule pathway. Increased Nt-formylation of cytosolic proteins appears to be important for adaptation to these stresses. This chain is Putative methionyl-tRNA formyltransferase (fmt1), found in Schizosaccharomyces pombe (strain 972 / ATCC 24843) (Fission yeast).